The primary structure comprises 355 residues: UDP-N-acetylglucosamine--N-acetylmuramyl-(pentapeptide) pyrophosphoryl-undecaprenol N-acetylglucosamine transferase (355 aa).

UDP-N-acetyl-alpha-D-glucosamine-binding positions include 15 to 17 (TGG), N127, R163, S191, I244, 263 to 268 (ALTVSE), and Q288.

Belongs to the glycosyltransferase 28 family. MurG subfamily.

Its subcellular location is the cell inner membrane. The enzyme catalyses di-trans,octa-cis-undecaprenyl diphospho-N-acetyl-alpha-D-muramoyl-L-alanyl-D-glutamyl-meso-2,6-diaminopimeloyl-D-alanyl-D-alanine + UDP-N-acetyl-alpha-D-glucosamine = di-trans,octa-cis-undecaprenyl diphospho-[N-acetyl-alpha-D-glucosaminyl-(1-&gt;4)]-N-acetyl-alpha-D-muramoyl-L-alanyl-D-glutamyl-meso-2,6-diaminopimeloyl-D-alanyl-D-alanine + UDP + H(+). It participates in cell wall biogenesis; peptidoglycan biosynthesis. Cell wall formation. Catalyzes the transfer of a GlcNAc subunit on undecaprenyl-pyrophosphoryl-MurNAc-pentapeptide (lipid intermediate I) to form undecaprenyl-pyrophosphoryl-MurNAc-(pentapeptide)GlcNAc (lipid intermediate II). The sequence is that of UDP-N-acetylglucosamine--N-acetylmuramyl-(pentapeptide) pyrophosphoryl-undecaprenol N-acetylglucosamine transferase from Salmonella enteritidis PT4 (strain P125109).